A 196-amino-acid polypeptide reads, in one-letter code: Cytochrome c biogenesis ATP-binding export protein CcmA (196 aa).

The region spanning Leu-2 to Leu-195 is the ABC transporter domain. Gly-34 to Thr-41 is a binding site for ATP.

It belongs to the ABC transporter superfamily. CcmA exporter (TC 3.A.1.107) family. As to quaternary structure, the complex is composed of two ATP-binding proteins (CcmA) and two transmembrane proteins (CcmB).

The protein localises to the cell inner membrane. The catalysed reaction is heme b(in) + ATP + H2O = heme b(out) + ADP + phosphate + H(+). In terms of biological role, part of the ABC transporter complex CcmAB involved in the biogenesis of c-type cytochromes; once thought to export heme, this seems not to be the case, but its exact role is uncertain. Responsible for energy coupling to the transport system. This is Cytochrome c biogenesis ATP-binding export protein CcmA from Rickettsia bellii (strain RML369-C).